Reading from the N-terminus, the 457-residue chain is UDP-N-acetylmuramoylalanine--D-glutamate ligase (457 aa).

Residue 117–123 (GTNGKST) participates in ATP binding.

The protein belongs to the MurCDEF family.

Its subcellular location is the cytoplasm. It catalyses the reaction UDP-N-acetyl-alpha-D-muramoyl-L-alanine + D-glutamate + ATP = UDP-N-acetyl-alpha-D-muramoyl-L-alanyl-D-glutamate + ADP + phosphate + H(+). It functions in the pathway cell wall biogenesis; peptidoglycan biosynthesis. Functionally, cell wall formation. Catalyzes the addition of glutamate to the nucleotide precursor UDP-N-acetylmuramoyl-L-alanine (UMA). In Paramagnetospirillum magneticum (strain ATCC 700264 / AMB-1) (Magnetospirillum magneticum), this protein is UDP-N-acetylmuramoylalanine--D-glutamate ligase.